Here is a 513-residue protein sequence, read N- to C-terminus: MPQSAEKILDHAPLFREPEYRQMLAEKKLNFECPHPERLVTDQREYSKGWEYREKNLAREALVVNPAKACQPLGAVFAAAGFERTMSFVHGSQGCVAYYRSHLSRHFKEPASAVSSSMTEDAAVFGGLKNMVDGLANTYALYDPKMIAVSTTCMAEVIGDDLHGFIENAKSEGAVPPEFDVPFAHTPAFVGSHVDGYDSMVKGILEHFWKGQARTQAAGTINIIPGFDGFCVGNNRELQRLLTLMGVSYTFIQDASDQFDTPSDGEYRMYDGGTTIKALRAALNAEATLSLQHYNSRKTLEYCREVGQATAAFHYPLGINATDAFLMKVSAISGREIPETIRLERGRLVDAMADSQSWLHGKTYAIYGDPDFVYAMARFVMETGGEPRHCLATNGTAAWQAEMTELLASSPFGKQAKVWPGKDLWALRSLLFTEPVDLLIGNSYGKYLERDTGTPLIRLMFPIFDRHHHHRFPLMGYQGGLRLLTTILDTIFDRLDRETMQTAVTDYSYDLTR.

The [8Fe-7S] cluster site is built by C70, C95, and C153.

This sequence belongs to the NifD/NifK/NifE/NifN family. As to quaternary structure, tetramer of two alpha and two beta chains. Forms complex with the iron protein (nitrogenase component 2). It depends on [8Fe-7S] cluster as a cofactor.

It carries out the reaction N2 + 8 reduced [2Fe-2S]-[ferredoxin] + 16 ATP + 16 H2O = H2 + 8 oxidized [2Fe-2S]-[ferredoxin] + 2 NH4(+) + 16 ADP + 16 phosphate + 6 H(+). Functionally, this molybdenum-iron protein is part of the nitrogenase complex that catalyzes the key enzymatic reactions in nitrogen fixation. This chain is Nitrogenase molybdenum-iron protein beta chain (nifK1), found in Sinorhizobium fredii (strain NBRC 101917 / NGR234).